The sequence spans 307 residues: D-alanine--D-alanine ligase (307 aa).

An ATP-grasp domain is found at 105-304 (KMLWKGFGLP…FEKLVEKILE (200 aa)). 135-190 (VARLGLPLMVKPSREGSSVGLTKVDSADKLKSAVDLALKFDDIVLIEEWLSGDELT) is an ATP binding site. Mg(2+) contacts are provided by Asp258, Glu271, and Asn273.

It belongs to the D-alanine--D-alanine ligase family. The cofactor is Mg(2+). It depends on Mn(2+) as a cofactor.

The protein resides in the cytoplasm. It carries out the reaction 2 D-alanine + ATP = D-alanyl-D-alanine + ADP + phosphate + H(+). It participates in cell wall biogenesis; peptidoglycan biosynthesis. Functionally, cell wall formation. In Actinobacillus succinogenes (strain ATCC 55618 / DSM 22257 / CCUG 43843 / 130Z), this protein is D-alanine--D-alanine ligase.